The sequence spans 236 residues: Sugar fermentation stimulation protein homolog (236 aa).

This sequence belongs to the SfsA family.

This is Sugar fermentation stimulation protein homolog from Paramagnetospirillum magneticum (strain ATCC 700264 / AMB-1) (Magnetospirillum magneticum).